A 479-amino-acid chain; its full sequence is Sucrose-6-phosphate hydrolase (479 aa).

Substrate contacts are provided by residues 44-47 (LLND), glutamine 63, 106-107 (YS), 166-167 (RD), and glutamate 223. Aspartate 47 is a catalytic residue.

This sequence belongs to the glycosyl hydrolase 32 family.

The protein localises to the cytoplasm. It catalyses the reaction Hydrolysis of terminal non-reducing beta-D-fructofuranoside residues in beta-D-fructofuranosides.. It functions in the pathway glycan biosynthesis; sucrose metabolism. The protein is Sucrose-6-phosphate hydrolase (scrB) of Streptococcus mutans serotype c (strain ATCC 700610 / UA159).